Here is a 122-residue protein sequence, read N- to C-terminus: Small ribosomal subunit protein uS13 (122 aa).

The tract at residues 99 to 122 (RGQRTHTNARTRKGPAKAIAGKKK) is disordered.

This sequence belongs to the universal ribosomal protein uS13 family. As to quaternary structure, part of the 30S ribosomal subunit. Forms a loose heterodimer with protein S19. Forms two bridges to the 50S subunit in the 70S ribosome.

In terms of biological role, located at the top of the head of the 30S subunit, it contacts several helices of the 16S rRNA. In the 70S ribosome it contacts the 23S rRNA (bridge B1a) and protein L5 of the 50S subunit (bridge B1b), connecting the 2 subunits; these bridges are implicated in subunit movement. Contacts the tRNAs in the A and P-sites. This Bradyrhizobium diazoefficiens (strain JCM 10833 / BCRC 13528 / IAM 13628 / NBRC 14792 / USDA 110) protein is Small ribosomal subunit protein uS13.